A 393-amino-acid polypeptide reads, in one-letter code: Cholinephosphotransferase 1 (393 aa).

Residues 1-40 (MGFFIPQSSLGNLKLYKYQSDDRSFLSNHVLRPFWRKFAT) lie on the Lumenal side of the membrane. A helical membrane pass occupies residues 41–61 (IFPLWMAPNLVTLLGFCFIIF). Over 62–172 (NVLTTLYYDP…YHTHKLYLAE (111 aa)) the chain is Cytoplasmic. A helical transmembrane segment spans residues 173–193 (FCGPVEGIIVLCISFIAVGIY). At 194–210 (GPQTIWHTKVAQFSWQD) the chain is on the lumenal side. A helical membrane pass occupies residues 211-231 (FVFDVETVHLMYAFCTGALIF). The Cytoplasmic segment spans residues 232-263 (NIVTAHTNVVRYYESQSTKSATPSKTAENISK). The chain crosses the membrane as a helical span at residues 264–284 (AVNGLLPFFAYFSSIFTLVLI). Position 285 (Gln-285) is a topological domain, lumenal. A helical membrane pass occupies residues 286–306 (PSFISLALILSIGFSVAFVVG). Over 307–320 (RMIIAHLTMQPFPM) the chain is Cytoplasmic. The chain crosses the membrane as a helical span at residues 321–341 (VNFPFLIPTIQLVLYAFMVYV). Residues 342–348 (LDYQKGS) are Lumenal-facing. Residues 349-369 (IVSALVWMGLGLTLAIHGMFI) form a helical membrane-spanning segment. Residues 370 to 393 (NDIIYDITTFLDIYALSIKHPKEI) are Cytoplasmic-facing.

This sequence belongs to the CDP-alcohol phosphatidyltransferase class-I family. It depends on Mg(2+) as a cofactor.

The protein localises to the microsome membrane. It is found in the endoplasmic reticulum membrane. The protein resides in the mitochondrion outer membrane. The enzyme catalyses CDP-choline + a 1,2-diacyl-sn-glycerol = a 1,2-diacyl-sn-glycero-3-phosphocholine + CMP + H(+). The catalysed reaction is CDP-N,N-dimethylethanolamine + a 1,2-diacyl-sn-glycerol = a 1,2-diacyl-sn-glycero-3-phospho-N,N-dimethylethanolamine + CMP + H(+). It functions in the pathway phospholipid metabolism; phosphatidylcholine biosynthesis; phosphatidylcholine from phosphocholine: step 2/2. Requires a divalent cation activator, and is inhibited by CMP. Activated by phospholipids, especially phosphatidylcholine. Its function is as follows. Catalyzes the final step in the CDP-choline route leading to phosphatidylcholin (PC). Preferentially uses CDP-monomethylethanolamine as aminoalcohol substrate. Shows highest activity toward di- and mono-unsaturated diacylglycerol species as lipid substrates. The CDP-choline pathway only contributes to net PC synthesis if exogenous choline is present. In its absence, this pathway recycles choline from PC turnover and may contribute to maintaining the proper PC species composition. The sequence is that of Cholinephosphotransferase 1 (CPT1) from Saccharomyces cerevisiae (strain ATCC 204508 / S288c) (Baker's yeast).